A 97-amino-acid polypeptide reads, in one-letter code: RNA-binding protein Hfq (97 aa).

A Sm domain is found at 10–70 (DPFLNALRKE…ISTIVPARSV (61 aa)). The segment at 75-97 (ENRPQAAPASTLVQVETVQQPAE) is disordered. A compositionally biased stretch (polar residues) spans 85-97 (TLVQVETVQQPAE).

Belongs to the Hfq family. In terms of assembly, homohexamer.

Its function is as follows. RNA chaperone that binds small regulatory RNA (sRNAs) and mRNAs to facilitate mRNA translational regulation in response to envelope stress, environmental stress and changes in metabolite concentrations. Also binds with high specificity to tRNAs. In Neisseria meningitidis serogroup C / serotype 2a (strain ATCC 700532 / DSM 15464 / FAM18), this protein is RNA-binding protein Hfq.